Here is a 409-residue protein sequence, read N- to C-terminus: Glycinol 4-dimethylallyltransferase (409 aa).

Residues 1–44 (MDWGLAISSHPKPYSVTTGGNLWRSKHTTKNIYFASSWISKASR) constitute a chloroplast transit peptide. 9 consecutive transmembrane segments (helical) span residues 113 to 133 (LSAF…LCAF), 148 to 168 (LSFL…EIYL), 200 to 220 (VIIS…TGSW), 222 to 242 (LICN…DVPL), 249 to 269 (PFVA…ISYF), 287 to 307 (LGFL…SKDI), 330 to 350 (AFWI…LAGA), 354 to 374 (HFWT…ILWY), and 388 to 408 (GSFY…MALI).

The protein belongs to the UbiA prenyltransferase family. It depends on Mg(2+) as a cofactor. Mn(2+) serves as cofactor. The cofactor is Co(2+).

Its subcellular location is the plastid. It is found in the chloroplast membrane. The enzyme catalyses (6aS,11aS)-3,6a,9-trihydroxypterocarpan + dimethylallyl diphosphate = (6aS,11aS)-2-dimethylallyl-3,6a,9-trihydroxypterocarpan + diphosphate. It carries out the reaction (6aS,11aS)-3,6a,9-trihydroxypterocarpan + dimethylallyl diphosphate = (6aS,11aS)-4-dimethylallyl-3,6a,9-trihydroxypterocarpan + diphosphate. The protein operates within phytoalexin biosynthesis; pterocarpan phytoalexin biosynthesis. Its function is as follows. Proposed to be involved in the biosynthesis of pterocarpan phytoalexins, specifically glyceollins. Can act as a prenyltransferase towards glycinol which is the direct precursor of glyceollins. Seems to be specific for prenylation at C-4 thus producing glyceollin I. The sequence is that of Glycinol 4-dimethylallyltransferase (G4DT) from Glycine max (Soybean).